Here is a 392-residue protein sequence, read N- to C-terminus: Acyl-CoA dehydrogenase IpdE1 (392 aa).

FAD contacts are provided by residues 126 to 129 and serine 171; that span reads QGYS. Glutamate 254 serves as the catalytic Proton acceptor. 371-373 contributes to the FAD binding site; it reads SNE.

It belongs to the acyl-CoA dehydrogenase family. As to quaternary structure, heterotetramer composed of 2 IpdE1 subunits and 2 IpdE2 subunits. The cofactor is FAD.

It carries out the reaction 3-[(3aS,4S,5R,7aS)-5-hydroxy-7a-methyl-1-oxo-octahydro-1H-inden-4-yl]propanoyl-CoA + A = (2E)-3-[(3aS,4S,5R,7aS)-5-hydroxy-7a-methyl-1-oxo-octahydro-1H-inden-4-yl]prop-2-enoyl-CoA + AH2. The protein operates within steroid metabolism; cholesterol degradation. Involved in cholesterol degradation. Catalyzes the dehydrogenation of 5OH-HIP-CoA to 5OH-HIPE-CoA. This chain is Acyl-CoA dehydrogenase IpdE1, found in Mycolicibacterium smegmatis (strain ATCC 700084 / mc(2)155) (Mycobacterium smegmatis).